Here is a 142-residue protein sequence, read N- to C-terminus: uncharacterized protein (142 aa).

Topologically, residues 1 to 9 (MDMVSPVLN) are cytoplasmic. Residues 10-30 (LQSSILGELVGIIGKVFFLLI) traverse the membrane as a helical segment. The Extracellular portion of the chain corresponds to 31 to 41 (EEIKYPIITPK). A helical transmembrane segment spans residues 42–62 (IIVDAQISSWSLFFFASICNL). Over 63 to 101 (SAKFREPIVTTSSIISLMESEKDLKNVNEYFQIMAKMLF) the chain is Cytoplasmic. The chain crosses the membrane as a helical span at residues 102–122 (ILENKIVVSLFVVFNISVLII). At 123-142 (VKSEPYSYGKVLFKPSSSIF) the chain is on the extracellular side.

Its subcellular location is the membrane. This is an uncharacterized protein from Saccharomyces cerevisiae (strain ATCC 204508 / S288c) (Baker's yeast).